The primary structure comprises 280 residues: Large ribosomal subunit protein uL2 (280 aa).

Disordered regions lie at residues 1-47 and 224-280; these read MAIR…NVHG and VVMN…SKKR. The span at 23-33 shows a compositional bias: basic and acidic residues; sequence EITRSTPEKSL. The segment covering 37–47 has biased composition (basic residues); sequence LPKKGGRNVHG. Residues 258 to 268 are compositionally biased toward polar residues; sequence RNPNRYSNNMI. Basic residues predominate over residues 270–280; sequence QRRRTNKSKKR.

This sequence belongs to the universal ribosomal protein uL2 family. As to quaternary structure, part of the 50S ribosomal subunit. Forms a bridge to the 30S subunit in the 70S ribosome.

One of the primary rRNA binding proteins. Required for association of the 30S and 50S subunits to form the 70S ribosome, for tRNA binding and peptide bond formation. It has been suggested to have peptidyltransferase activity; this is somewhat controversial. Makes several contacts with the 16S rRNA in the 70S ribosome. The protein is Large ribosomal subunit protein uL2 of Corynebacterium diphtheriae (strain ATCC 700971 / NCTC 13129 / Biotype gravis).